The following is an 86-amino-acid chain: Large ribosomal subunit protein bL31B (86 aa).

It belongs to the bacterial ribosomal protein bL31 family. Type B subfamily. As to quaternary structure, part of the 50S ribosomal subunit.

The sequence is that of Large ribosomal subunit protein bL31B from Chloroherpeton thalassium (strain ATCC 35110 / GB-78).